Here is a 451-residue protein sequence, read N- to C-terminus: Serine--tRNA ligase (451 aa).

258–260 contacts L-serine; the sequence is TSE. An ATP-binding site is contributed by 289–291; that stretch reads RSE. E312 lines the L-serine pocket. Residue 376–379 participates in ATP binding; it reads EISS. S411 is an L-serine binding site.

The protein belongs to the class-II aminoacyl-tRNA synthetase family. Type-1 seryl-tRNA synthetase subfamily. In terms of assembly, homodimer. The tRNA molecule binds across the dimer.

It localises to the cytoplasm. The enzyme catalyses tRNA(Ser) + L-serine + ATP = L-seryl-tRNA(Ser) + AMP + diphosphate + H(+). The catalysed reaction is tRNA(Sec) + L-serine + ATP = L-seryl-tRNA(Sec) + AMP + diphosphate + H(+). It functions in the pathway aminoacyl-tRNA biosynthesis; selenocysteinyl-tRNA(Sec) biosynthesis; L-seryl-tRNA(Sec) from L-serine and tRNA(Sec): step 1/1. In terms of biological role, catalyzes the attachment of serine to tRNA(Ser). Is also able to aminoacylate tRNA(Sec) with serine, to form the misacylated tRNA L-seryl-tRNA(Sec), which will be further converted into selenocysteinyl-tRNA(Sec). This is Serine--tRNA ligase from Bordetella pertussis (strain Tohama I / ATCC BAA-589 / NCTC 13251).